The chain runs to 207 residues: Probable RNA 2'-phosphotransferase (207 aa).

It belongs to the KptA/TPT1 family.

Functionally, removes the 2'-phosphate from RNA via an intermediate in which the phosphate is ADP-ribosylated by NAD followed by a presumed transesterification to release the RNA and generate ADP-ribose 1''-2''-cyclic phosphate (APPR&gt;P). May function as an ADP-ribosylase. The chain is Probable RNA 2'-phosphotransferase from Methanosarcina barkeri (strain Fusaro / DSM 804).